The following is a 285-amino-acid chain: Protease HtpX homolog (285 aa).

The next 2 membrane-spanning stretches (helical) occupy residues Thr7–Gly27 and Gly30–Asp50. His131 is a binding site for Zn(2+). Residue Glu132 is part of the active site. His135 serves as a coordination point for Zn(2+). 2 helical membrane-spanning segments follow: residues Ile146–Gly166 and Ile177–Ile197. Glu202 is a binding site for Zn(2+).

It belongs to the peptidase M48B family. It depends on Zn(2+) as a cofactor.

Its subcellular location is the cell inner membrane. The sequence is that of Protease HtpX homolog from Burkholderia multivorans (strain ATCC 17616 / 249).